The primary structure comprises 100 residues: Integration host factor subunit alpha (100 aa).

Residues 53 to 72 form a disordered region; sequence FDLRDKRQRPGRNPKTGEEI.

Belongs to the bacterial histone-like protein family. Heterodimer of an alpha and a beta chain.

Its function is as follows. This protein is one of the two subunits of integration host factor, a specific DNA-binding protein that functions in genetic recombination as well as in transcriptional and translational control. The protein is Integration host factor subunit alpha of Stutzerimonas stutzeri (strain A1501) (Pseudomonas stutzeri).